The sequence spans 583 residues: Laminarase-resistance protein LRE1 (583 aa).

Residues 1 to 24 (MPNTHTQHVQISEPNPVNTLSTPS) are compositionally biased toward polar residues. Disordered regions lie at residues 1–31 (MPNT…HRHR) and 330–380 (LKDN…HMQH). Composition is skewed to basic and acidic residues over residues 332-342 (DNPRYAKDGYP) and 354-366 (LDSD…SGES). Residues Ser393 and Ser398 each carry the phosphoserine modification. The tract at residues 457–486 (SCTPDGKEEMNRLKSNDSNEYSKSEGQIRT) is disordered. Basic and acidic residues predominate over residues 461-479 (DGKEEMNRLKSNDSNEYSK). Phosphoserine occurs at positions 516 and 552.

Post-translationally, phosphorylated by CDC28/CDK1.

Functionally, overexpression affects chitinase expression, cell separation and budding pattern, and increases trehalose accumulation and heat resistance by inhibiting protein kinase CBK1. Overexpression also suppresses temperature-induced hyperosmosensitivity and sensitivity to cell wall degrading enzymes. Overexpression of both LRE1 and PBN1 confers resistance to laminarinase. This is Laminarase-resistance protein LRE1 (LRE1) from Saccharomyces cerevisiae (strain ATCC 204508 / S288c) (Baker's yeast).